The primary structure comprises 238 residues: MAGHSKWANTKYRKERADHKRGKIFSRTIKELISAVKMGGPDPKTNARLRVIIQKAKDQNIPSENIERNLKKASSADQKNFEDVTYELYGYGGVGIIVEAMTDNKNRTASDMRIAVNKRGGSLVEPGSVLYNFSRKGACYVPKNSIDEAALLSHVIEVGAEDLDNDDEEHFVVLCDPVDLSSVKEQLVALGVTCTEEKLIYVPLRVVDCDEKDGEANLALIEWLEKIDDVDEVYHNMA.

The protein belongs to the TACO1 family.

Its subcellular location is the cytoplasm. This chain is Probable transcriptional regulatory protein CF0838, found in Chlamydia felis (strain Fe/C-56) (Chlamydophila felis).